The chain runs to 642 residues: Core protein VP4 (642 aa).

The protein belongs to the orbivirus VP4 family.

The protein resides in the virion. In terms of biological role, the VP4 protein is one of the five proteins (with VP1, VP3, VP6 and VP7) which form the inner capsid of the virus. The protein is Core protein VP4 (Segment-4) of African horse sickness virus (AHSV).